A 59-amino-acid polypeptide reads, in one-letter code: Large ribosomal subunit protein bL32 (59 aa).

Residues 1–59 (MAVQQNRKTRSKRGMRRSHDALSAAALSTDATTGEVHRRHHVSPDGFYRGKQVVEARDE) are disordered. Basic residues predominate over residues 7–16 (RKTRSKRGMR). Over residues 21–33 (ALSAAALSTDATT) the composition is skewed to low complexity.

It belongs to the bacterial ribosomal protein bL32 family.

This is Large ribosomal subunit protein bL32 from Marinobacter nauticus (strain ATCC 700491 / DSM 11845 / VT8) (Marinobacter aquaeolei).